Consider the following 202-residue polypeptide: uncharacterized protein (202 aa).

Disordered regions lie at residues 1–32 and 46–95; these read MRPE…ASLG and PSSV…PSYT. Positions 47–79 are enriched in low complexity; sequence SSVSLSSSSSRRSMPSLGSSRSSSLPSTGSLRS.

This is an uncharacterized protein from Equus caballus (Horse).